The following is a 474-amino-acid chain: tRNA-2-methylthio-N(6)-dimethylallyladenosine synthase (474 aa).

The 118-residue stretch at K3–S120 folds into the MTTase N-terminal domain. [4Fe-4S] cluster-binding residues include C12, C49, C83, C157, C161, and C164. Residues R143 to R375 enclose the Radical SAM core domain. Residues R378–R441 form the TRAM domain.

It belongs to the methylthiotransferase family. MiaB subfamily. As to quaternary structure, monomer. The cofactor is [4Fe-4S] cluster.

It is found in the cytoplasm. It carries out the reaction N(6)-dimethylallyladenosine(37) in tRNA + (sulfur carrier)-SH + AH2 + 2 S-adenosyl-L-methionine = 2-methylsulfanyl-N(6)-dimethylallyladenosine(37) in tRNA + (sulfur carrier)-H + 5'-deoxyadenosine + L-methionine + A + S-adenosyl-L-homocysteine + 2 H(+). Its function is as follows. Catalyzes the methylthiolation of N6-(dimethylallyl)adenosine (i(6)A), leading to the formation of 2-methylthio-N6-(dimethylallyl)adenosine (ms(2)i(6)A) at position 37 in tRNAs that read codons beginning with uridine. This chain is tRNA-2-methylthio-N(6)-dimethylallyladenosine synthase, found in Vibrio vulnificus (strain CMCP6).